A 556-amino-acid chain; its full sequence is Formate--tetrahydrofolate ligase (556 aa).

65 to 72 serves as a coordination point for ATP; sequence TPAGEGKT.

Belongs to the formate--tetrahydrofolate ligase family.

It carries out the reaction (6S)-5,6,7,8-tetrahydrofolate + formate + ATP = (6R)-10-formyltetrahydrofolate + ADP + phosphate. It functions in the pathway one-carbon metabolism; tetrahydrofolate interconversion. The sequence is that of Formate--tetrahydrofolate ligase from Heliobacterium modesticaldum (strain ATCC 51547 / Ice1).